The sequence spans 156 residues: S-ribosylhomocysteine lyase (156 aa).

The Fe cation site is built by H56, H60, and C123.

This sequence belongs to the LuxS family. Homodimer. Fe cation is required as a cofactor.

It carries out the reaction S-(5-deoxy-D-ribos-5-yl)-L-homocysteine = (S)-4,5-dihydroxypentane-2,3-dione + L-homocysteine. Its function is as follows. Involved in the synthesis of autoinducer 2 (AI-2) which is secreted by bacteria and is used to communicate both the cell density and the metabolic potential of the environment. The regulation of gene expression in response to changes in cell density is called quorum sensing. Catalyzes the transformation of S-ribosylhomocysteine (RHC) to homocysteine (HC) and 4,5-dihydroxy-2,3-pentadione (DPD). This is S-ribosylhomocysteine lyase from Staphylococcus haemolyticus (strain JCSC1435).